A 339-amino-acid polypeptide reads, in one-letter code: Ketol-acid reductoisomerase (NADP(+)) (339 aa).

A KARI N-terminal Rossmann domain is found at 1-182 (MRVYYDRDAD…GGGRAGVIET (182 aa)). Residues 24 to 27 (YGSQ), arginine 48, serine 51, threonine 53, and 83 to 86 (DELQ) each bind NADP(+). The active site involves histidine 108. Residue glycine 134 participates in NADP(+) binding. Residues 183–328 (TFKEECETDL…EKLRAMMPWI (146 aa)) form the KARI C-terminal knotted domain. Mg(2+)-binding residues include aspartate 191, glutamate 195, glutamate 227, and glutamate 231. Position 252 (serine 252) interacts with substrate.

It belongs to the ketol-acid reductoisomerase family. It depends on Mg(2+) as a cofactor.

The enzyme catalyses (2R)-2,3-dihydroxy-3-methylbutanoate + NADP(+) = (2S)-2-acetolactate + NADPH + H(+). The catalysed reaction is (2R,3R)-2,3-dihydroxy-3-methylpentanoate + NADP(+) = (S)-2-ethyl-2-hydroxy-3-oxobutanoate + NADPH + H(+). The protein operates within amino-acid biosynthesis; L-isoleucine biosynthesis; L-isoleucine from 2-oxobutanoate: step 2/4. It participates in amino-acid biosynthesis; L-valine biosynthesis; L-valine from pyruvate: step 2/4. Functionally, involved in the biosynthesis of branched-chain amino acids (BCAA). Catalyzes an alkyl-migration followed by a ketol-acid reduction of (S)-2-acetolactate (S2AL) to yield (R)-2,3-dihydroxy-isovalerate. In the isomerase reaction, S2AL is rearranged via a Mg-dependent methyl migration to produce 3-hydroxy-3-methyl-2-ketobutyrate (HMKB). In the reductase reaction, this 2-ketoacid undergoes a metal-dependent reduction by NADPH to yield (R)-2,3-dihydroxy-isovalerate. The sequence is that of Ketol-acid reductoisomerase (NADP(+)) from Xanthobacter autotrophicus (strain ATCC BAA-1158 / Py2).